The primary structure comprises 174 residues: NAD(P)H-quinone oxidoreductase subunit J (174 aa).

The protein belongs to the complex I 30 kDa subunit family. As to quaternary structure, NDH-1 can be composed of about 15 different subunits; different subcomplexes with different compositions have been identified which probably have different functions.

Its subcellular location is the cellular thylakoid membrane. It carries out the reaction a plastoquinone + NADH + (n+1) H(+)(in) = a plastoquinol + NAD(+) + n H(+)(out). The enzyme catalyses a plastoquinone + NADPH + (n+1) H(+)(in) = a plastoquinol + NADP(+) + n H(+)(out). In terms of biological role, NDH-1 shuttles electrons from an unknown electron donor, via FMN and iron-sulfur (Fe-S) centers, to quinones in the respiratory and/or the photosynthetic chain. The immediate electron acceptor for the enzyme in this species is believed to be plastoquinone. Couples the redox reaction to proton translocation, and thus conserves the redox energy in a proton gradient. Cyanobacterial NDH-1 also plays a role in inorganic carbon-concentration. The polypeptide is NAD(P)H-quinone oxidoreductase subunit J (Picosynechococcus sp. (strain ATCC 27264 / PCC 7002 / PR-6) (Agmenellum quadruplicatum)).